We begin with the raw amino-acid sequence, 159 residues long: Small ribosomal subunit protein uS7 (159 aa).

It belongs to the universal ribosomal protein uS7 family. As to quaternary structure, part of the 30S ribosomal subunit. Contacts proteins S9 and S11.

Its function is as follows. One of the primary rRNA binding proteins, it binds directly to 16S rRNA where it nucleates assembly of the head domain of the 30S subunit. Is located at the subunit interface close to the decoding center, probably blocks exit of the E-site tRNA. This Wolbachia sp. subsp. Brugia malayi (strain TRS) protein is Small ribosomal subunit protein uS7.